Consider the following 93-residue polypeptide: Cobalt transport protein CbiN (93 aa).

Transmembrane regions (helical) follow at residues 5–25 (LILL…NHGG) and 63–83 (LLFT…LGYA).

Belongs to the CbiN family. Forms an energy-coupling factor (ECF) transporter complex composed of an ATP-binding protein (A component, CbiO), a transmembrane protein (T component, CbiQ) and 2 possible substrate-capture proteins (S components, CbiM and CbiN) of unknown stoichimetry.

It is found in the cell inner membrane. The protein operates within cofactor biosynthesis; adenosylcobalamin biosynthesis. In terms of biological role, part of the energy-coupling factor (ECF) transporter complex CbiMNOQ involved in cobalt import. The polypeptide is Cobalt transport protein CbiN (Klebsiella pneumoniae (strain 342)).